A 232-amino-acid chain; its full sequence is U2 small nuclear ribonucleoprotein B'' (232 aa).

Residues 10-89 (QTVYLRNLNE…KRMRVQYAKT (80 aa)) enclose the RRM 1 domain. The tract at residues 92–159 (DCLATEDGST…QEPPAPPNNI (68 aa)) is disordered. Residues 108–123 (KKQEEKAAEKKRRAEE) show a composition bias toward basic and acidic residues. Residues 127-151 (SGPNAAAQSNGTGYQASRLGKTSQE) are compositionally biased toward polar residues. The 75-residue stretch at 158-232 (NILFIQNLPA…NPMAISYAKK (75 aa)) folds into the RRM 2 domain.

It belongs to the RRM U1 A/B'' family. Component of the spliceosome where it is associated with snRNP U2.

The protein localises to the nucleus. The protein resides in the cajal body. It localises to the nucleoplasm. It is found in the cytoplasm. Functionally, involved in nuclear pre-mRNA splicing. This Oryza sativa subsp. indica (Rice) protein is U2 small nuclear ribonucleoprotein B''.